A 619-amino-acid polypeptide reads, in one-letter code: Dihydroxy-acid dehydratase (619 aa).

Mg(2+) is bound at residue Asp-81. Cys-122 serves as a coordination point for [2Fe-2S] cluster. The Mg(2+) site is built by Asp-123 and Lys-124. Lys-124 bears the N6-carboxylysine mark. Position 195 (Cys-195) interacts with [2Fe-2S] cluster. A Mg(2+)-binding site is contributed by Glu-494. Catalysis depends on Ser-520, which acts as the Proton acceptor.

This sequence belongs to the IlvD/Edd family. As to quaternary structure, homodimer. [2Fe-2S] cluster serves as cofactor. Requires Mg(2+) as cofactor.

The enzyme catalyses (2R)-2,3-dihydroxy-3-methylbutanoate = 3-methyl-2-oxobutanoate + H2O. The catalysed reaction is (2R,3R)-2,3-dihydroxy-3-methylpentanoate = (S)-3-methyl-2-oxopentanoate + H2O. It participates in amino-acid biosynthesis; L-isoleucine biosynthesis; L-isoleucine from 2-oxobutanoate: step 3/4. It functions in the pathway amino-acid biosynthesis; L-valine biosynthesis; L-valine from pyruvate: step 3/4. Functionally, functions in the biosynthesis of branched-chain amino acids. Catalyzes the dehydration of (2R,3R)-2,3-dihydroxy-3-methylpentanoate (2,3-dihydroxy-3-methylvalerate) into 2-oxo-3-methylpentanoate (2-oxo-3-methylvalerate) and of (2R)-2,3-dihydroxy-3-methylbutanoate (2,3-dihydroxyisovalerate) into 2-oxo-3-methylbutanoate (2-oxoisovalerate), the penultimate precursor to L-isoleucine and L-valine, respectively. This chain is Dihydroxy-acid dehydratase, found in Shewanella frigidimarina (strain NCIMB 400).